Here is a 1148-residue protein sequence, read N- to C-terminus: Ice nucleation protein (1148 aa).

3 disordered regions span residues 110-131 (ADPA…PTAI), 222-256 (YGST…GYGS), and 367-394 (GSTQ…GSNL). A compositionally biased stretch (low complexity) spans 114 to 128 (STSTSTSTSTLTPMP). Residues 180–1099 (ATYGSTLSGD…LSAGEDSTLI (920 aa)) are octapeptide periodicity. A compositionally biased stretch (polar residues) spans 230-250 (EDSSLTAGYGSTQTAQEGSNL).

The protein belongs to the bacterial ice nucleation protein family.

It is found in the cell outer membrane. Ice nucleation proteins enable bacteria to nucleate crystallization in supercooled water. This chain is Ice nucleation protein (inaK), found in Pseudomonas syringae.